The sequence spans 256 residues: Isoprenyl transferase (256 aa).

Asp-33 is an active-site residue. Position 33 (Asp-33) interacts with Mg(2+). Residues 34–37 (GNGR), Trp-38, Arg-46, His-50, and 78–80 (STE) each bind substrate. Asn-81 functions as the Proton acceptor in the catalytic mechanism. Substrate contacts are provided by residues Trp-82, Arg-84, Arg-201, and 207–209 (RIS). A Mg(2+)-binding site is contributed by Glu-220.

The protein belongs to the UPP synthase family. As to quaternary structure, homodimer. The cofactor is Mg(2+).

Functionally, catalyzes the condensation of isopentenyl diphosphate (IPP) with allylic pyrophosphates generating different type of terpenoids. This Staphylococcus aureus (strain Mu50 / ATCC 700699) protein is Isoprenyl transferase.